We begin with the raw amino-acid sequence, 204 residues long: Outer-membrane lipoprotein carrier protein (204 aa).

The N-terminal stretch at 1–21 (MKKYLNLTALLLVGISNVTWA) is a signal peptide.

This sequence belongs to the LolA family. In terms of assembly, monomer.

The protein resides in the periplasm. In terms of biological role, participates in the translocation of lipoproteins from the inner membrane to the outer membrane. Only forms a complex with a lipoprotein if the residue after the N-terminal Cys is not an aspartate (The Asp acts as a targeting signal to indicate that the lipoprotein should stay in the inner membrane). The sequence is that of Outer-membrane lipoprotein carrier protein from Histophilus somni (strain 2336) (Haemophilus somnus).